The following is a 270-amino-acid chain: Tryptophan synthase alpha chain (270 aa).

Active-site proton acceptor residues include glutamate 49 and aspartate 60.

It belongs to the TrpA family. In terms of assembly, tetramer of two alpha and two beta chains.

It carries out the reaction (1S,2R)-1-C-(indol-3-yl)glycerol 3-phosphate + L-serine = D-glyceraldehyde 3-phosphate + L-tryptophan + H2O. The protein operates within amino-acid biosynthesis; L-tryptophan biosynthesis; L-tryptophan from chorismate: step 5/5. In terms of biological role, the alpha subunit is responsible for the aldol cleavage of indoleglycerol phosphate to indole and glyceraldehyde 3-phosphate. The protein is Tryptophan synthase alpha chain of Marinobacter nauticus (strain ATCC 700491 / DSM 11845 / VT8) (Marinobacter aquaeolei).